A 54-amino-acid chain; its full sequence is U7-myrmicitoxin-Tb1a (54 aa).

A signal peptide spans 1-26 (MQLSHLLLAFAMIFVMTIIHTPQVQA). Positions 27 to 36 (DAMADADADA) are excised as a propeptide. C40 and C49 are disulfide-bonded.

Expressed by the venom gland.

Its subcellular location is the secreted. Functionally, venom protein with unknown function. Does not induce paralysis when a high dose is administered by intrathoracic injection into the blowfly Lucilia caesar. This is U7-myrmicitoxin-Tb1a from Tetramorium bicarinatum (Tramp ant).